Consider the following 241-residue polypeptide: Lipopolysaccharide export system ATP-binding protein LptB (241 aa).

The ABC transporter domain occupies 4–237 (LTAKNLAKAY…EHVKRVYLGE (234 aa)). Residue 36-43 (GPNGAGKT) coordinates ATP.

This sequence belongs to the ABC transporter superfamily. Outer membrane lipopolysaccharide export (TC 1.B.42) family. In terms of assembly, component of the lipopolysaccharide transport and assembly complex. The LptBFG transporter is composed of two ATP-binding proteins (LptB) and two transmembrane proteins (LptF and LptG).

The protein localises to the cytoplasm. It localises to the cell inner membrane. Part of the ABC transporter complex LptBFG involved in the translocation of lipopolysaccharide (LPS) from the inner membrane to the outer membrane. Probably responsible for energy coupling to the transport system. The sequence is that of Lipopolysaccharide export system ATP-binding protein LptB (lptB) from Escherichia coli O157:H7.